The sequence spans 1088 residues: MRFCFDRLCFATKRPAQNSNSNAPHSSTTVDAPPRPADVDVATVPVATPAPPPQQPVSNLFYADYQKLQPAIIDRDWERDRDTDTDTRSEAKPPDIVEHIEPVEEQRQIHTQIQSPAEIQIQIPPTPPAPSIQIQIQQRYRRHSSAEDRNLNTRRNDSNITEALRKAASMQQEPNANYQFPTDLGLVSIVNNNNNTNTHPSGSNSGSNNNSNINNNLVGGIVTLPAAGGLIGLEHTASGLRLIPAPPTHSDVLTHTLIYGTPPSGAQQLNQDPRSLLHQQELQLQQRYQQLQQLQAQTQGLYTSQGSPVLYHQPSPGSSQPVAIPGATCHSPTQLQPPNTLNLQQQMQSLRISGCTPSGTGGSATPSPVGLVDPNFIVSNYVAASPQEERFIQIIQAKELKIQEMQRALQFKDNEIAELKSHLDKFQSVFPFSRGSAAGCAGTGGASGSGAGGSGGSGPGTATGATRKSGQNFQRQRALGISAEPQSESSLLLEHVSFPKYDKDERSRELIKAAILDNDFMKNLDLTQIREIVDCMYPVKYPAKNLIIKEGDVGSIVYVMEDGRVEVSREGKYLSTLSGAKVLGELAILYNCQRTATITAITECNLWAIERQCFQTIMMRTGLIRQAEYSDFLKSVPIFKDLAEDTLIKISDVLEETHYQRGDYIVRQGARGDTFFIISKGKVRVTIKQQDTQEEKFIRMLGKGDFFGEKALQGDDLRTANIICESADGVSCLVIDRETFNQLISNLDEIKHRYDDEGAMERRKINEEFRDINLTDLRVIATLGVGGFGRVELVQTNGDSSRSFALKQMKKSQIVETRQQQHIMSEKEIMGEANCQFIVKLFKTFKDKKYLYMLMESCLGGELWTILRDKGNFDDSTTRFYTACVVEAFDYLHSRNIIYRDLKPENLLLNERGYVKLVDFGFAKKLQTGRKTWTFCGTPEYVAPEVILNRGHDISADYWSLGVLMFELLTGTPPFTGSDPMRTYNIILKGIDAIEFPRNITRNASNLIKKLCRDNPAERLGYQRGGISEIQKHKWFDGFYWWGLQNCTLEPPIKPAVKSVVDTTNFDDYPPDPEGPPPDDVTGWDKDF.

Residues 1–69 form a dimerization region; that stretch reads MRFCFDRLCF…LFYADYQKLQ (69 aa). The span at 15–28 shows a compositional bias: polar residues; it reads PAQNSNSNAPHSST. Disordered stretches follow at residues 15–39, 128–158, 191–211, 305–336, and 441–477; these read PAQN…PADV, PAPS…RNDS, NNNN…NNNS, QGSP…TQLQ, and AGTG…QRQR. The tract at residues 70–528 is regulatory; it reads PAIIDRDWER…DFMKNLDLTQ (459 aa). Over residues 144-157 the composition is skewed to basic and acidic residues; sequence SSAEDRNLNTRRND. The segment covering 441–461 has biased composition (gly residues); sequence AGTGGASGSGAGGSGGSGPGT. Residues 584–587, 594–595, R699, 708–711, and 718–719 contribute to the 3',5'-cyclic GMP site; these read GELA, RT, and GEKA. The Protein kinase domain maps to 777-1036; sequence LRVIATLGVG…ISEIQKHKWF (260 aa). ATP-binding positions include 783 to 791 and K807; that span reads LGVGGFGRV. D901 (proton acceptor) is an active-site residue. A phosphothreonine mark is found at T934 and T938. An AGC-kinase C-terminal domain is found at 1037–1088; that stretch reads DGFYWWGLQNCTLEPPIKPAVKSVVDTTNFDDYPPDPEGPPPDDVTGWDKDF. The disordered stretch occupies residues 1064–1088; sequence TNFDDYPPDPEGPPPDDVTGWDKDF.

Belongs to the protein kinase superfamily. AGC Ser/Thr protein kinase family. cGMP subfamily.

The enzyme catalyses L-seryl-[protein] + ATP = O-phospho-L-seryl-[protein] + ADP + H(+). The catalysed reaction is L-threonyl-[protein] + ATP = O-phospho-L-threonyl-[protein] + ADP + H(+). In Drosophila melanogaster (Fruit fly), this protein is cGMP-dependent protein kinase, isozyme 2 forms cD4/T1/T3A/T3B (for).